We begin with the raw amino-acid sequence, 89 residues long: Probable Fe(2+)-trafficking protein (89 aa).

It belongs to the Fe(2+)-trafficking protein family.

Its function is as follows. Could be a mediator in iron transactions between iron acquisition and iron-requiring processes, such as synthesis and/or repair of Fe-S clusters in biosynthetic enzymes. This chain is Probable Fe(2+)-trafficking protein, found in Stenotrophomonas maltophilia (strain R551-3).